A 384-amino-acid chain; its full sequence is MEVSGHPQARRCCPEALGKLFPGLCFLCFLVTYALVGAVVFSAIEDGQVLVAADDGEFEKFLEELCRILNCSETVVEDRKQDLQGHLQKVKPQWFNRTTHWSFLSSLFFCCTVFSTVGYGYIYPVTRLGKYLCMLYALFGIPLMFLVLTDTGDILATILSTSYNRFRKFPFFTRPLLSKWCPKSLFKKKPDPKPADEAVPQIIISAEELPGPKLGTCPSRPSCSMELFERSHALEKQNTLQLPPQAMERSNSCPELVLGRLSYSIISNLDEVGQQVERLDIPLPIIALIVFAYISCAAAILPFWETQLDFENAFYFCFVTLTTIGFGDTVLEHPNFFLFFSIYIIVGMEIVFIAFKLVQNRLIDIYKNVMLFFAKGKFYHLVKK.

Residues 1–23 are Cytoplasmic-facing; the sequence is MEVSGHPQARRCCPEALGKLFPG. Residues 24–44 form a helical membrane-spanning segment; sequence LCFLCFLVTYALVGAVVFSAI. A glycan (N-linked (GlcNAc...) asparagine) is linked at Asn70. The segment at residues 103–129 is an intramembrane region (pore-forming); it reads FLSSLFFCCTVFSTVGYGYIYPVTRLG. K(+)-binding residues include Thr116, Val117, Gly118, and Tyr119. Positions 116–121 are selectivity filter 1; it reads TVGYGY. Residues 130–148 traverse the membrane as a helical segment; the sequence is KYLCMLYALFGIPLMFLVL. Over 149-280 the chain is Cytoplasmic; that stretch reads TDTGDILATI…EVGQQVERLD (132 aa). An interaction with calcineurin region spans residues 200 to 205; that stretch reads PQIIIS. The interaction with YWHAH stretch occupies residues 249–254; it reads RSNSCP. 2 positions are modified to phosphoserine: Ser252 and Ser264. The chain crosses the membrane as a helical span at residues 281 to 301; that stretch reads IPLPIIALIVFAYISCAAAIL. The segment at residues 314-328 is an intramembrane region (pore-forming); sequence FYFCFVTLTTIGFGD. Residues 323 to 328 form a selectivity filter 2 region; that stretch reads TIGFGD. A helical membrane pass occupies residues 335–355; sequence NFFLFFSIYIIVGMEIVFIAF. At 356–384 the chain is on the cytoplasmic side; sequence KLVQNRLIDIYKNVMLFFAKGKFYHLVKK.

The protein belongs to the two pore domain potassium channel (TC 1.A.1.8) family. In terms of assembly, homodimer. Heterodimer with KCNK2. Heterodimer with KCNK10. Interacts with calcineurin. Interacts with YWHAH, in a phosphorylation-dependent manner. Post-translationally, N-glycosylated. In terms of processing, phosphorylation of Ser-264 is required for the binding of 14-3-3eta/YWHAH. Calcineurin-mediated dephosphorylation enhances channel activity. Expressed in dorsal root ganglion and trigeminal ganglion neurons. Detected at low levels in spinal cord. Expressed in regulatory T cells (at protein level).

The protein localises to the cell membrane. The enzyme catalyses K(+)(in) = K(+)(out). Activated by volatile anesthetics but inhibited by amide local anesthetics. Inhibited by Ba(2+) ions. Inhibited by free polyunsaturated fatty acids. Channel conductance is sensitive to intracellular pH, it decreases at acidic pH and increases at basic pH. In contrast to its mouse ortholog, it is not regulated by extracellular protons. Insensitive to changes in temperature. Its function is as follows. K(+) channel that conducts outward and inward rectifying currents at depolarized and hyperpolarized membrane potentials, respectively. The outward rectifying currents are voltage-dependent, coupled to K(+) electrochemical gradient across the membrane, whereas the inward currents can be induced in response to activation of Ca(2+)-mobilizing receptors. Homo- and heterodimerizes to form functional channels with distinct regulatory and gating properties. In trigeminal ganglia sensory neurons, the heterodimers of KCNK18/TRESK and KCNK2/TREK-1 or KCNK10/TREK-2 inhibit neuronal firing and neurogenic inflammation by stabilizing the resting membrane potential at K(+) equilibrium potential as well as by regulating the threshold of action potentials and the spike frequency. In thymocytes, conducts K(+) currents upon T cell receptor (TCR) signaling leading to sustained Ca(2+) influx and NF-kappa-B activation, FOXP3 transcription and positive selection of regulatory T cell (Treg) progenitor subsets. Appears to mediate the analgesics effects of hydroxy-alpha-sanshool, a metabolite naturally present in Schezuan pepper and other Xanthoxylum plants. This Homo sapiens (Human) protein is Potassium channel subfamily K member 18.